The following is a 462-amino-acid chain: L-seryl-tRNA(Sec) selenium transferase (462 aa).

Residue K294 is modified to N6-(pyridoxal phosphate)lysine.

The protein belongs to the SelA family. As to quaternary structure, homodecamer; pentamer of dimers. Binds only one seryl-tRNA(Sec) per dimer. Requires pyridoxal 5'-phosphate as cofactor.

It localises to the cytoplasm. The enzyme catalyses L-seryl-tRNA(Sec) + selenophosphate + H(+) = L-selenocysteinyl-tRNA(Sec) + phosphate. It participates in aminoacyl-tRNA biosynthesis; selenocysteinyl-tRNA(Sec) biosynthesis; selenocysteinyl-tRNA(Sec) from L-seryl-tRNA(Sec) (bacterial route): step 1/1. Converts seryl-tRNA(Sec) to selenocysteinyl-tRNA(Sec) required for selenoprotein biosynthesis. The chain is L-seryl-tRNA(Sec) selenium transferase from Yersinia pseudotuberculosis serotype O:1b (strain IP 31758).